Here is a 960-residue protein sequence, read N- to C-terminus: MTMTNPSGNTPDTSAGPAFRYTAELAGEIERSWQQYWIDNGTFNAPNPVGDLAVSGDKLPEDKLFVQDMFPYPSGAGLHVGHPLGYIATDVFARFNRMLGKNVLHTLGYDAFGLPAEQYAIQTGTHPRTTTMANIANMQRQLGALGLGHDPRRSVATTDPEFYKWTQWIFLQIFNAWFDTKQQKARPISELIPLLESGEVALPEGFEGSADSYSELDAVEKAKVVDEFRLVYRSHSMVNWCPGLGTVLANEEVTADGRSERGNFPVFRKKLSQWMMRITAYSDRLIDDLDLLDWPDKVKSMQRNWIGRSRGAEVDFDALGHTITVFTTRPDTLFGASYMVLAPEHELVDALVAAGTNSYEGIDPRWTFGQATPAEAVKAYRASIAAKSDLERQENKEKTGVYLGVNAVNPVNGESIPVFIGDYVLTGYGTGAIMAVPAHDTRDYEFATEFGLPIREVVAGGNIAEAAYTESGAAVNSANDQGLDINGLDKQEAIAQVIEWLVDKQKGSEKIQYKLRDWLFARQRYWGEPFPVVYDENGLAHALPESMLPVELPEVEDYKPVSFDPDDADSEPHPPLAKATEWTQVELDLGDGLKKYTRDTNVMPQWAGSSWYQLRYIDPTNSEAFCDIENERYWTGPRSAEDSGGVDLYVGGVEHAVLHLLYSRFWHKVLFDLGFVTSREPYRRLFNQGYIQAFAYTDSRGVYVPAEEVEEKDGKFYYQGEEVNQEYGKMGKSLKNAVAPDDICRDFGADTLRVYEMAMGPLDTSRPWSTKDVIGAHRFLQRLWRLVVSEDDGSIVVTDAALTDDDLKQLHRTIAGMRDDYEGLRINTVVAKAIEYVNYLTKAYGSTGAPRAAVEPLVIMVAAVAPHIAEELWKRLGHNDTITFVPFPEYEDKWLVDDEVEMPVQINGKVRARIMVPADASQDQISEIALASEAVATHIEGKNVIKKIVVSGRMVNLVVK.

The 'HIGH' region signature appears at 71 to 82 (PYPSGAGLHVGH). Positions 729–733 (KMGKS) match the 'KMSKS' region motif. Lysine 732 contributes to the ATP binding site.

Belongs to the class-I aminoacyl-tRNA synthetase family.

The protein localises to the cytoplasm. It catalyses the reaction tRNA(Leu) + L-leucine + ATP = L-leucyl-tRNA(Leu) + AMP + diphosphate. This Corynebacterium diphtheriae (strain ATCC 700971 / NCTC 13129 / Biotype gravis) protein is Leucine--tRNA ligase.